We begin with the raw amino-acid sequence, 101 residues long: Small ribosomal subunit protein uS14A (101 aa).

The protein belongs to the universal ribosomal protein uS14 family. Part of the 30S ribosomal subunit. Contacts proteins S3 and S10.

Its function is as follows. Binds 16S rRNA, required for the assembly of 30S particles and may also be responsible for determining the conformation of the 16S rRNA at the A site. This Mycolicibacterium smegmatis (strain ATCC 700084 / mc(2)155) (Mycobacterium smegmatis) protein is Small ribosomal subunit protein uS14A.